The following is a 113-amino-acid chain: uncharacterized protein (113 aa).

The interval 31-113 (SNNNNNNNNN…YSPTKFNLQY (83 aa)) is disordered. Residues 32 to 98 (NNNNNNNNNN…NNNNNNNNNN (67 aa)) are compositionally biased toward low complexity. Positions 99–113 (SSSFEYSPTKFNLQY) are enriched in polar residues.

This is an uncharacterized protein from Dictyostelium discoideum (Social amoeba).